Consider the following 499-residue polypeptide: Potassium channel subfamily K member 5 (499 aa).

The Cytoplasmic segment spans residues 1–7 (MVDRGPL). The helical transmembrane segment at 8–26 (LTSAIIFYLAIGAAIFEVL) threads the bilayer. The N-linked (GlcNAc...) asparagine glycan is linked to asparagine 77. Positions 85 to 112 (WPNAMIFAATVITTIGYGNVAPKTPAGR) form an intramembrane region, pore-forming. K(+) contacts are provided by threonine 98, isoleucine 99, glycine 100, and tyrosine 101. The segment at 98–103 (TIGYGN) is selectivity filter 1. The chain crosses the membrane as a helical span at residues 113-133 (LFCVFYGLFGVPLCLTWISAL). Over 134–157 (GKFFGGRAKRLGQFLTKRGVSLRK) the chain is Cytoplasmic. Residues 158–180 (AQITCTVIFIVWGVLVHLVIPPF) traverse the membrane as a helical segment. An intramembrane region (pore-forming) is located at residues 190–215 (YIEGLYYSFITISTIGFGDFVAGVNP). Threonine 203, isoleucine 204, glycine 205, and phenylalanine 206 together coordinate K(+). A selectivity filter 2 region spans residues 203 to 208 (TIGFGD). A helical membrane pass occupies residues 230–250 (WIYLGLAWLSLFVNWKVSMFV). Residues 251 to 325 (EVHKAIKKRR…SGGGETGPGP (75 aa)) lie on the Cytoplasmic side of the membrane. Disordered stretches follow at residues 312–335 (AMKT…GGLP), 360–388 (QTLR…SPAP), and 428–499 (GLSD…PKGT). Residues 316–334 (SGGGETGPGPGLGPQGGGL) show a composition bias toward gly residues. Residues 370–382 (RSPDEEAVARAPE) are compositionally biased toward basic and acidic residues. Serine 371 is modified (phosphoserine). Low complexity predominate over residues 466–480 (SSSESTFTSTESELS).

The protein belongs to the two pore domain potassium channel (TC 1.A.1.8) family. As to quaternary structure, homodimer; disulfide-linked. Heterodimer with KCNK16 and KCNK17. As to expression, abundant expression in kidney, also detected in liver, placenta and small intestine. In the kidney, expression is restricted to the distal tubules and collecting ducts. Not expressed in proximal tubules or glomeruli. Expressed in pancreas, in both endocrine (alpha, beta, gamma, delta, and epsilon) and exocrine (acinar and ductal) cells.

The protein localises to the membrane. The enzyme catalyses K(+)(in) = K(+)(out). The channel conductance is stimulated by extracellular alkaline pH. Inhibited by quinine, quinidine and external acidification. In terms of biological role, k(+) channel that conducts voltage-dependent outward rectifying currents upon membrane depolarization. Voltage sensing is coupled to K(+) electrochemical gradient in an 'ion flux gating' mode where outward but not inward ion flow opens the gate. Homo- and heterodimerizes to form functional channels with distinct regulatory and gating properties. The polypeptide is Potassium channel subfamily K member 5 (Homo sapiens (Human)).